Here is a 302-residue protein sequence, read N- to C-terminus: Oxygen-dependent coproporphyrinogen-III oxidase (302 aa).

Substrate is bound at residue Ser90. Residues His94 and His104 each coordinate a divalent metal cation. His104 acts as the Proton donor in catalysis. Residue 106-108 (NVR) coordinates substrate. 2 residues coordinate a divalent metal cation: His143 and His173. Residues 238–273 (YVEFNLIYDRGTIFGLQSNGRTESILLSMPPIVKWR) form an important for dimerization region.

Belongs to the aerobic coproporphyrinogen-III oxidase family. As to quaternary structure, homodimer. A divalent metal cation serves as cofactor.

It is found in the cytoplasm. The catalysed reaction is coproporphyrinogen III + O2 + 2 H(+) = protoporphyrinogen IX + 2 CO2 + 2 H2O. It participates in porphyrin-containing compound metabolism; protoporphyrin-IX biosynthesis; protoporphyrinogen-IX from coproporphyrinogen-III (O2 route): step 1/1. In terms of biological role, involved in the heme biosynthesis. Catalyzes the aerobic oxidative decarboxylation of propionate groups of rings A and B of coproporphyrinogen-III to yield the vinyl groups in protoporphyrinogen-IX. The protein is Oxygen-dependent coproporphyrinogen-III oxidase of Methylobacillus flagellatus (strain ATCC 51484 / DSM 6875 / VKM B-1610 / KT).